The sequence spans 89 residues: Small ribosomal subunit protein uS15c (89 aa).

This sequence belongs to the universal ribosomal protein uS15 family. In terms of assembly, part of the 30S ribosomal subunit.

It is found in the plastid. The protein resides in the chloroplast. The polypeptide is Small ribosomal subunit protein uS15c (rps15) (Chloranthus spicatus (Chulantree)).